Consider the following 500-residue polypeptide: L-arabinose isomerase (500 aa).

The Mn(2+) site is built by Glu306, Glu333, His349, and His448.

This sequence belongs to the arabinose isomerase family. Mn(2+) serves as cofactor.

The catalysed reaction is beta-L-arabinopyranose = L-ribulose. It functions in the pathway carbohydrate degradation; L-arabinose degradation via L-ribulose; D-xylulose 5-phosphate from L-arabinose (bacterial route): step 1/3. Its function is as follows. Catalyzes the conversion of L-arabinose to L-ribulose. This chain is L-arabinose isomerase, found in Cellvibrio japonicus (strain Ueda107) (Pseudomonas fluorescens subsp. cellulosa).